The sequence spans 205 residues: uncharacterized protein (205 aa).

The first 19 residues, 1 to 19 (MKTLCVLSIFLALLGGLCT), serve as a signal peptide directing secretion. Residues 40 to 133 (VSSVASTSTP…PKTSKNNPKT (94 aa)) show a composition bias toward low complexity. Residues 40 to 135 (VSSVASTSTP…TSKNNPKTQE (96 aa)) form a disordered region. The helical transmembrane segment at 147 to 167 (GILYLFILLLIIFVIILICFI) threads the bilayer.

It localises to the host membrane. This is an uncharacterized protein from Equine herpesvirus 2 (strain 86/87) (EHV-2).